Reading from the N-terminus, the 461-residue chain is Lysosomal proton-coupled steroid conjugate and bile acid symporter SLC46A3 (461 aa).

The signal sequence occupies residues 1–25 (MKILFVEPAIFLSAFAMTLTGPLTT). Topologically, residues 26 to 73 (QYVYRRIWEETGNYTFSSDSNISECEKNKSSPIFAFQEEVQKKVSRFN) are extracellular. Residues Asn38, Asn46, and Asn53 are each glycosylated (N-linked (GlcNAc...) asparagine). A helical transmembrane segment spans residues 74–94 (LQMDISGLIPGLVSTFILLSI). The Cytoplasmic portion of the chain corresponds to 95–101 (SDHYGRK). A helical transmembrane segment spans residues 102–124 (FPMILSSVGALATSVWLCLLCYF). The Extracellular segment spans residues 125 to 133 (AFPFQLLIA). Residues 134–156 (STFIGAFCGNYTTFWGACFAYIV) form a helical membrane-spanning segment. Residues 157 to 170 (DQCKEHKQKTIRIA) are Cytoplasmic-facing. The helical transmembrane segment at 171–191 (IIDFLLGLVTGLTGLSSGYFI) threads the bilayer. At 192 to 197 (RELGFE) the chain is on the extracellular side. A helical membrane pass occupies residues 198-218 (WSFLIIAVSLAVNLIYILFFL). Topologically, residues 219–261 (GDPVKECSSQNVTMSCSEGFKNLFYRTYMLFKNASGKRRFLLC) are cytoplasmic. Residues 262 to 282 (LLLFTVITYFFVVIGIAPIFI) traverse the membrane as a helical segment. Residues 283-294 (LYELDSPLCWNE) are Extracellular-facing. The chain crosses the membrane as a helical span at residues 295–315 (VFIGYGSALGSASFLTSFLGI). At 316-324 (WLFSYCMED) the chain is on the cytoplasmic side. The chain crosses the membrane as a helical span at residues 325–345 (IHMAFIGIFTTMTGMAMTAFA). Over 346–347 (ST) the chain is Extracellular. A helical transmembrane segment spans residues 348-368 (TLMMFLARVPFLFTIVPFSVL). Topologically, residues 369–382 (RSMLSKVVRSTEQG) are cytoplasmic. The chain crosses the membrane as a helical span at residues 383-403 (TLFACIAFLETLGGVTAVSTF). Residues 404-415 (NGIYSATVAWYP) are Extracellular-facing. A helical membrane pass occupies residues 416–436 (GFTFLLSAGLLLLPAISLCVV). Residues 437–461 (KCTSWNEGSYELLIQEESSEDASDR) are Cytoplasmic-facing. Positions 446 to 449 (YELL) match the Tyrosine-based lysosomal-sorting motif motif.

It belongs to the major facilitator superfamily. SLC46A family.

It is found in the lysosome membrane. The catalysed reaction is estrone 3-sulfate(out) + n H(+)(out) = estrone 3-sulfate(in) + n H(+)(in). It catalyses the reaction 25-hydroxyvitamin D3 sulfate(out) + n H(+)(out) = 25-hydroxyvitamin D3 sulfate(in) + n H(+)(in). The enzyme catalyses cholate(out) + n H(+)(out) = cholate(in) + n H(+)(in). It carries out the reaction glycocholate(out) + n H(+)(out) = glycocholate(in) + n H(+)(in). The catalysed reaction is taurocholate(out) + n H(+)(out) = taurocholate(in) + n H(+)(in). It catalyses the reaction dehydroepiandrosterone 3-sulfate(out) + n H(+)(out) = dehydroepiandrosterone 3-sulfate(in) + n H(+)(in). The enzyme catalyses N-acetyl-D-muramoyl-L-alanyl-D-isoglutamine(out) + n H(+)(out) = N-acetyl-D-muramoyl-L-alanyl-D-isoglutamine(in) + n H(+)(in). It carries out the reaction 2',3'-cGAMP(out) + n H(+)(out) = 2',3'-cGAMP(in) + n H(+)(in). In terms of biological role, lysosomal proton-coupled steroid conjugate and bile acid transporter. Preferentially recognizes lipophilic steroid conjugates or bile acis as endogenous substrates and seems to mediate escape from lysosomes to the cytoplasm. Modulates hepatic cytosolic copper homeostasis, maybe acting as a lysosomal copper transporter and sequestering copper ions in the lysosome. Transports catabolites of non-cleavable antibody-drug conjugates from the lysosome to the cytoplasm. Delivers pathogen-associated molecular patterns to cytosolic pattern recognition receptors as part of the innate immune response to microbes. Selectively transports bacterial muramyl dipeptide (MDP) into the cytosol for recognition by NOD2, triggering inflammatory responses. Likely acts as a redundant importer of cyclic GMP-AMP dinucleotides (cGAMPs) in monocyte and macrophage cell lineages. The transport mechanism, its electrogenicity and stoichiometry remain to be elucidated. This Homo sapiens (Human) protein is Lysosomal proton-coupled steroid conjugate and bile acid symporter SLC46A3.